The chain runs to 426 residues: Dihydroorotase (426 aa).

Positions 58 and 60 each coordinate Zn(2+). Substrate is bound by residues 60–62 and asparagine 92; that span reads HLR. Positions 150, 177, and 230 each coordinate Zn(2+). Asparagine 276 contacts substrate. Residue aspartate 303 participates in Zn(2+) binding. Aspartate 303 is a catalytic residue. Substrate-binding positions include histidine 307 and 321-322; that span reads FG.

It belongs to the metallo-dependent hydrolases superfamily. DHOase family. Class I DHOase subfamily. It depends on Zn(2+) as a cofactor.

The catalysed reaction is (S)-dihydroorotate + H2O = N-carbamoyl-L-aspartate + H(+). It functions in the pathway pyrimidine metabolism; UMP biosynthesis via de novo pathway; (S)-dihydroorotate from bicarbonate: step 3/3. In terms of biological role, catalyzes the reversible cyclization of carbamoyl aspartate to dihydroorotate. This chain is Dihydroorotase, found in Listeria monocytogenes serovar 1/2a (strain ATCC BAA-679 / EGD-e).